Reading from the N-terminus, the 472-residue chain is Glutamate synthase [NADPH] small chain (472 aa).

One can recognise a 4Fe-4S ferredoxin-type domain in the interval Gly38–Leu69. Positions 47, 50, 55, and 59 each coordinate [4Fe-4S] cluster.

Aggregate of 4 catalytic active heterodimers, consisting of a large and a small subunit. [4Fe-4S] cluster serves as cofactor.

It carries out the reaction 2 L-glutamate + NADP(+) = L-glutamine + 2-oxoglutarate + NADPH + H(+). It functions in the pathway amino-acid biosynthesis; L-glutamate biosynthesis via GLT pathway; L-glutamate from 2-oxoglutarate and L-glutamine (NADP(+) route): step 1/1. The protein operates within energy metabolism; nitrogen metabolism. Catalyzes the conversion of L-glutamine and 2-oxoglutarate into two molecules of L-glutamate. The sequence is that of Glutamate synthase [NADPH] small chain (gltD) from Escherichia coli (strain K12).